The sequence spans 586 residues: MFS-type transporter ucsD (586 aa).

The tract at residues 1 to 56 (MSRNSGTTLEDGPLHADPTTEAPNNATVTTNVTANDENTEKEVDADAAAAAPAEAP) is disordered. Low complexity-rich tracts occupy residues 19 to 36 (TTEA…TAND) and 46 to 56 (DAAAAAPAEAP). N-linked (GlcNAc...) asparagine glycosylation is found at Asn-25 and Asn-31. 8 helical membrane passes run 65 to 85 (WAIV…GTII), 101 to 121 (SFIW…PLMA), 131 to 151 (WLTL…GGAN), 164 to 184 (GFGG…LVPL), 192 to 212 (GIVQ…GGLL), 220 to 240 (WVFY…FFFL), 263 to 283 (AIFI…GAVY), and 290 to 310 (VIVP…YEWT). The N-linked (GlcNAc...) asparagine glycan is linked to Asn-324. Transmembrane regions (helical) follow at residues 330–350 (VLGV…FMPI), 368–388 (LPLF…LAKF), 393–413 (PMHL…SLLD), 420–440 (AWAC…AILL), 458–478 (VWTF…SAIF), and 532–552 (LRTV…LIWL).

The protein belongs to the major facilitator superfamily.

The protein resides in the membrane. MFS-type transporter; part of the gene cluster that mediates the biosynthesis of UCS1025A, a member of the pyrrolizidinone family that acts as a strong telomerase inhibitor and displays potent antibacterial and antitumor properties. These compounds share a hemiaminal-containing pyrrolizidinone core fused with a gamma-lactone, giving a furopyrrolizidine that is connected to a decalin fragment. This Acremonium sp protein is MFS-type transporter ucsD.